We begin with the raw amino-acid sequence, 436 residues long: Trigger factor (436 aa).

The PPIase FKBP-type domain occupies 161–246; that stretch reads GDQVIVDFDG…VREVKEPTLP (86 aa).

Belongs to the FKBP-type PPIase family. Tig subfamily.

The protein resides in the cytoplasm. It catalyses the reaction [protein]-peptidylproline (omega=180) = [protein]-peptidylproline (omega=0). Involved in protein export. Acts as a chaperone by maintaining the newly synthesized protein in an open conformation. Functions as a peptidyl-prolyl cis-trans isomerase. The protein is Trigger factor of Thioalkalivibrio sulfidiphilus (strain HL-EbGR7).